The primary structure comprises 985 residues: Vacuolar membrane protease (985 aa).

The Cytoplasmic portion of the chain corresponds to 1-20 (MASSRAQRFNPIAFTPWPVT). Residues 21–41 (CITTIVYLALLIPILVINLVV) traverse the membrane as a helical segment. The Vacuolar portion of the chain corresponds to 42–388 (PSAPETNPKG…MFGTAFAVFR (347 aa)). Asparagine 53, asparagine 116, and asparagine 119 each carry an N-linked (GlcNAc...) asparagine glycan. 2 residues coordinate Zn(2+): histidine 175 and aspartate 187. Glutamate 221 serves as the catalytic Proton acceptor. Position 222 (glutamate 222) interacts with Zn(2+). The N-linked (GlcNAc...) asparagine glycan is linked to asparagine 238. Zn(2+)-binding residues include glutamate 247 and histidine 320. The helical transmembrane segment at 389 to 409 (LHTLFAISVALLVIAPLVIFV) threads the bilayer. The Cytoplasmic segment spans residues 410–440 (TNRMYLFSMSKSLEGTGDQVSLRGLRGFSRT). A helical transmembrane segment spans residues 441–461 (PIILVTATTIPICLAYLLEKV). The Vacuolar segment spans residues 462–470 (NPYIVHSSQ). A helical membrane pass occupies residues 471-491 (FSVWSMMFSAWIFLAWFLACA). The Cytoplasmic portion of the chain corresponds to 492-502 (ADFFRPSALHR). A helical membrane pass occupies residues 503-523 (AYSYTWIFIATWIMLVINTVY). Topologically, residues 524–527 (ANQK) are vacuolar. The chain crosses the membrane as a helical span at residues 528 to 548 (GIAAGYFLLFYFAGAFLATWI). Topologically, residues 549 to 666 (SYLELFALPR…TLPRWTWVLQ (118 aa)) are cytoplasmic. Residues 563–612 (ARQTTGRRPSSLSSRLLTSSADELRSNASPSTAEFPGAAGEDTDPTESTS) form a disordered region. Positions 566–582 (TTGRRPSSLSSRLLTSS) are enriched in low complexity. A helical transmembrane segment spans residues 667–687 (LLLLAPIVLILVGQLALFLTA). At 688-700 (SMCQVGSDGVSTF) the chain is on the vacuolar side. Residues 701–721 (VVYLACAVFTTLLCIPLFPLI) traverse the membrane as a helical segment. The Cytoplasmic portion of the chain corresponds to 722-727 (HRFTYH). Residues 728 to 748 (IPTFLFLVFIGTLIYNLVAFP) form a helical membrane-spanning segment. Residues 749-985 (FSPANRLKTF…VEASHSFTIQ (237 aa)) lie on the Vacuolar side of the membrane. N-linked (GlcNAc...) asparagine glycans are attached at residues asparagine 767, asparagine 795, and asparagine 839.

This sequence belongs to the peptidase M28 family. Zn(2+) is required as a cofactor.

The protein resides in the vacuole membrane. Functionally, may be involved in vacuolar sorting and osmoregulation. This is Vacuolar membrane protease from Ajellomyces capsulatus (strain G186AR / H82 / ATCC MYA-2454 / RMSCC 2432) (Darling's disease fungus).